The chain runs to 234 residues: Sugar fermentation stimulation protein homolog (234 aa).

This sequence belongs to the SfsA family.

The polypeptide is Sugar fermentation stimulation protein homolog (Shewanella baltica (strain OS155 / ATCC BAA-1091)).